The primary structure comprises 371 residues: Regulatory protein RapK (371 aa).

6 TPR repeats span residues 7 to 42 (EVVA…FDEM), 93 to 130 (EYNF…IPDE), 175 to 208 (ATST…AKET), 215 to 248 (AQLF…ESWL), 254 to 290 (INSL…MENK), and 331 to 364 (DELS…EQKM).

The protein belongs to the Rap family.

It is found in the cytoplasm. Its activity is regulated as follows. Inhibited by PhrK, which prevents RapK-ComA interaction. Involved in the regulation of genetic competence development. Inhibits the activity of ComA, a transcriptional factor that regulates the development of genetic competence. Likely affects the activity of additional regulators, in particular Spo0A. The polypeptide is Regulatory protein RapK (rapK) (Bacillus subtilis (strain 168)).